A 740-amino-acid chain; its full sequence is Ion-translocating oxidoreductase complex subunit C (740 aa).

2 consecutive 4Fe-4S ferredoxin-type domains span residues 369 to 397 (GEPQ…QQLY) and 407 to 436 (KATT…VQYF). Residues Cys-377, Cys-380, Cys-383, Cys-387, Cys-416, Cys-419, Cys-422, and Cys-426 each coordinate [4Fe-4S] cluster. Residues 598–716 (AKARKLEQQQ…EPEEQVDPRK (119 aa)) form a disordered region.

This sequence belongs to the 4Fe4S bacterial-type ferredoxin family. RnfC subfamily. The complex is composed of six subunits: RsxA, RsxB, RsxC, RsxD, RsxE and RsxG. It depends on [4Fe-4S] cluster as a cofactor.

Its subcellular location is the cell inner membrane. Functionally, part of a membrane-bound complex that couples electron transfer with translocation of ions across the membrane. Required to maintain the reduced state of SoxR. This Shigella flexneri serotype 5b (strain 8401) protein is Ion-translocating oxidoreductase complex subunit C.